The primary structure comprises 427 residues: UBX domain-containing protein 2 (427 aa).

Disordered regions lie at residues 115–143 and 273–331; these read FDQS…SRAS and ETSG…GVAD. Over residues 311-326 the composition is skewed to low complexity; sequence STTESQGESSSQQAES. Residues 349–425 enclose the UBX domain; that stretch reads PGPNVTRIQI…GIQNTALQFE (77 aa). S371 is subject to Phosphoserine.

As to quaternary structure, interacts with cdc48.

Functionally, involved in CDC48-dependent protein degradation through the ubiquitin/proteasome pathway. This is UBX domain-containing protein 2 (ubx2) from Schizosaccharomyces pombe (strain 972 / ATCC 24843) (Fission yeast).